The sequence spans 204 residues: Octanoyltransferase (204 aa).

In terms of domain architecture, BPL/LPL catalytic spans 27–202 (QGGEEALLLL…RFQPLLNLHL (176 aa)). Substrate contacts are provided by residues 65 to 72 (RGGDVTYH), 132 to 134 (SIG), and 145 to 147 (GFA). Cysteine 163 serves as the catalytic Acyl-thioester intermediate.

Belongs to the LipB family.

Its subcellular location is the cytoplasm. It carries out the reaction octanoyl-[ACP] + L-lysyl-[protein] = N(6)-octanoyl-L-lysyl-[protein] + holo-[ACP] + H(+). It functions in the pathway protein modification; protein lipoylation via endogenous pathway; protein N(6)-(lipoyl)lysine from octanoyl-[acyl-carrier-protein]: step 1/2. In terms of biological role, catalyzes the transfer of endogenously produced octanoic acid from octanoyl-acyl-carrier-protein onto the lipoyl domains of lipoate-dependent enzymes. Lipoyl-ACP can also act as a substrate although octanoyl-ACP is likely to be the physiological substrate. In Citrifermentans bemidjiense (strain ATCC BAA-1014 / DSM 16622 / JCM 12645 / Bem) (Geobacter bemidjiensis), this protein is Octanoyltransferase.